A 174-amino-acid polypeptide reads, in one-letter code: Gamma-crystallin C (174 aa).

Beta/gamma crystallin 'Greek key' domains are found at residues 2 to 40 and 41 to 83; these read GKIT…RVDS and GCWM…CLIP. At C23 the chain carries S-methylcysteine. The interval 84–87 is connecting peptide; the sequence is QTSS. 2 consecutive Beta/gamma crystallin 'Greek key' domains span residues 88 to 128 and 129 to 171; these read HRLR…HVLE and GCWV…RRVV.

This sequence belongs to the beta/gamma-crystallin family. In terms of assembly, monomer.

Functionally, crystallins are the dominant structural components of the vertebrate eye lens. In Canis lupus familiaris (Dog), this protein is Gamma-crystallin C (CRYGC).